Consider the following 279-residue polypeptide: Undecaprenyl-diphosphatase (279 aa).

The next 8 helical transmembrane spans lie at 2–22, 44–64, 85–105, 113–133, 163–183, 188–208, 225–245, and 255–275; these read LFIELLKAIFFGVIEGVTEWL, AFMEMFNIVIQLGAIIAVIVI, WQLWLKVAIACIPSIIIAVPL, FNHMLPIAIALIVYGIAFLWI, VLSIIPGTSRSGATILGAIIL, TVAADFTFFLAIPTMFGYSGL, LLVLLVASLTAFAVSLYVIKL, and FTVFGRYRIVLGSLLIVYSVF.

The protein belongs to the UppP family.

The protein localises to the cell membrane. The enzyme catalyses di-trans,octa-cis-undecaprenyl diphosphate + H2O = di-trans,octa-cis-undecaprenyl phosphate + phosphate + H(+). Catalyzes the dephosphorylation of undecaprenyl diphosphate (UPP). Confers resistance to bacitracin. This is Undecaprenyl-diphosphatase from Streptococcus equi subsp. equi (strain 4047).